The chain runs to 721 residues: 1,4-alpha-glucan branching enzyme GlgB (721 aa).

The active-site Nucleophile is the aspartate 404. Glutamate 457 serves as the catalytic Proton donor.

The protein belongs to the glycosyl hydrolase 13 family. GlgB subfamily. Monomer.

It catalyses the reaction Transfers a segment of a (1-&gt;4)-alpha-D-glucan chain to a primary hydroxy group in a similar glucan chain.. It functions in the pathway glycan biosynthesis; glycogen biosynthesis. Catalyzes the formation of the alpha-1,6-glucosidic linkages in glycogen by scission of a 1,4-alpha-linked oligosaccharide from growing alpha-1,4-glucan chains and the subsequent attachment of the oligosaccharide to the alpha-1,6 position. This Bradyrhizobium diazoefficiens (strain JCM 10833 / BCRC 13528 / IAM 13628 / NBRC 14792 / USDA 110) protein is 1,4-alpha-glucan branching enzyme GlgB.